The primary structure comprises 74 residues: uncharacterized protein (74 aa).

The next 2 helical transmembrane spans lie at 3–23 (YSAL…CFSF) and 35–55 (ILFF…MLLT).

The protein resides in the cell membrane. This is an uncharacterized protein from Mycoplasma genitalium (strain ATCC 33530 / DSM 19775 / NCTC 10195 / G37) (Mycoplasmoides genitalium).